The sequence spans 258 residues: Triosephosphate isomerase (258 aa).

9–11 is a substrate binding site; sequence NWK. The Electrophile role is filled by His105. Residue Glu176 is the Proton acceptor of the active site. The substrate site is built by Gly182 and Ser214.

This sequence belongs to the triosephosphate isomerase family. As to quaternary structure, homodimer.

Its subcellular location is the cytoplasm. It catalyses the reaction D-glyceraldehyde 3-phosphate = dihydroxyacetone phosphate. It functions in the pathway carbohydrate biosynthesis; gluconeogenesis. The protein operates within carbohydrate degradation; glycolysis; D-glyceraldehyde 3-phosphate from glycerone phosphate: step 1/1. Its function is as follows. Involved in the gluconeogenesis. Catalyzes stereospecifically the conversion of dihydroxyacetone phosphate (DHAP) to D-glyceraldehyde-3-phosphate (G3P). This Mycoplasmopsis agalactiae (strain NCTC 10123 / CIP 59.7 / PG2) (Mycoplasma agalactiae) protein is Triosephosphate isomerase.